The following is a 919-amino-acid chain: Probable disease resistance protein At4g27220 (919 aa).

Coiled-coil stretches lie at residues 1–30 (MFRS…LKRS) and 74–95 (VEIL…KKIS). The 279-residue stretch at 121–399 (MLDKLKDCLK…AEGLLDGQHH (279 aa)) folds into the NB-ARC domain. Residue 141 to 148 (GMGGVGKT) participates in ATP binding. LRR repeat units lie at residues 447 to 468 (GEGF…QDKF), 469 to 492 (VSSV…VIEG), 494 to 516 (ETLV…FLQA), 519 to 540 (NLRI…FSNL), 542 to 564 (SLRS…ESLV), 565 to 587 (KLQF…EALS), 588 to 610 (SLRY…TILQ), and 611 to 635 (LSSL…EREG).

It belongs to the disease resistance NB-LRR family.

Functionally, probable disease resistance protein. In Arabidopsis thaliana (Mouse-ear cress), this protein is Probable disease resistance protein At4g27220.